A 414-amino-acid polypeptide reads, in one-letter code: MPTRPARSGLHSLAQLLRSDVVGGFLLIGGALTALIWANSPFGHVYEALRSFSFGPEALHLHLTVEAWVADGLLAIFFFVVGNELKQEFVHGELRNPRRAMLPIVAAVCGMAVPALIYAAFNAGDPARLPGWGIPMATDIAFAVAILAVVGRHLPSPLRTFLLTLAIVDDLGAIIVIAVFYTASLSFLPLIGAGMLLAVFGYLQRGRGVAARLNSAALPNWVVYLPLAGVIWALVHASGVHATIAGVAMGLLMRTVPLAGEKESPSHRLAHLLGPWSSGLVLPVFAVMSAGVVFAGGLGAVLDDTAALGIIAGLVVGKTVGIAGGSWVTTKLTAAELSPALRWIDITGMALLAGIGFTVSLLITDLSFPDYPEALVHAKAGVLLASLLATVLGAVVLAVRNAHYRKLRQAVSPQ.

The next 11 helical transmembrane spans lie at 22 to 42 (VGGF…NSPF), 61 to 81 (LHLT…FFVV), 101 to 121 (MLPI…YAAF), 131 to 151 (GWGI…AVVG), 171 to 191 (LGAI…LPLI), 215 to 235 (SAAL…WALV), 239 to 259 (GVHA…VPLA), 281 to 301 (VLPV…LGAV), 308 to 328 (LGII…GSWV), 343 to 363 (WIDI…SLLI), and 379 to 399 (KAGV…VLAV).

This sequence belongs to the NhaA Na(+)/H(+) (TC 2.A.33) antiporter family.

It is found in the cell membrane. It carries out the reaction Na(+)(in) + 2 H(+)(out) = Na(+)(out) + 2 H(+)(in). Functionally, na(+)/H(+) antiporter that extrudes sodium in exchange for external protons. The polypeptide is Na(+)/H(+) antiporter NhaA (Thermobifida fusca (strain YX)).